Here is a 95-residue protein sequence, read N- to C-terminus: MAFDQDTVRRTAHLARIALPQAEIPAVADQLERIMGLVEELRAIETTDVPIMAHPLDLDQPLRPDMVVHQDQREVLMASAPAAEHGLFLVPKVIE.

It belongs to the GatC family. Heterotrimer of A, B and C subunits.

It carries out the reaction L-glutamyl-tRNA(Gln) + L-glutamine + ATP + H2O = L-glutaminyl-tRNA(Gln) + L-glutamate + ADP + phosphate + H(+). It catalyses the reaction L-aspartyl-tRNA(Asn) + L-glutamine + ATP + H2O = L-asparaginyl-tRNA(Asn) + L-glutamate + ADP + phosphate + 2 H(+). Allows the formation of correctly charged Asn-tRNA(Asn) or Gln-tRNA(Gln) through the transamidation of misacylated Asp-tRNA(Asn) or Glu-tRNA(Gln) in organisms which lack either or both of asparaginyl-tRNA or glutaminyl-tRNA synthetases. The reaction takes place in the presence of glutamine and ATP through an activated phospho-Asp-tRNA(Asn) or phospho-Glu-tRNA(Gln). This Acidithiobacillus ferrooxidans (strain ATCC 23270 / DSM 14882 / CIP 104768 / NCIMB 8455) (Ferrobacillus ferrooxidans (strain ATCC 23270)) protein is Aspartyl/glutamyl-tRNA(Asn/Gln) amidotransferase subunit C.